The primary structure comprises 365 residues: Peptide chain release factor 2 (365 aa).

Gln251 bears the N5-methylglutamine mark.

The protein belongs to the prokaryotic/mitochondrial release factor family. Post-translationally, methylated by PrmC. Methylation increases the termination efficiency of RF2.

It is found in the cytoplasm. Peptide chain release factor 2 directs the termination of translation in response to the peptide chain termination codons UGA and UAA. This Campylobacter jejuni subsp. doylei (strain ATCC BAA-1458 / RM4099 / 269.97) protein is Peptide chain release factor 2.